The chain runs to 509 residues: Zinc finger protein Aiolos (509 aa).

Residues 1–19 (MEDIQTNAELKSTQEQSVP) show a composition bias toward polar residues. A disordered region spans residues 1–86 (MEDIQTNAEL…MGNAEEPEIP (86 aa)). 2 positions are modified to phosphoserine: S22 and S42. Residues 56 to 72 (DSMKVKDEYSERDENVL) are compositionally biased toward basic and acidic residues. Glycyl lysine isopeptide (Lys-Gly) (interchain with G-Cter in SUMO2) cross-links involve residues K61, K73, and K100. 3 C2H2-type zinc fingers span residues 118–140 (MNCDVCGLSCISFNVLMVHKRSH), 146–168 (FQCNQCGASFTQKGNLLRHIKLH), and 174–196 (FKCHLCNYACQRRDALTGHLRTH). The C2H2-type 4; atypical zinc finger occupies 202-224 (YKCEFCGRSYKQRSSLEEHKERC). K245 is covalently cross-linked (Glycyl lysine isopeptide (Lys-Gly) (interchain with G-Cter in SUMO2)). T326 bears the Phosphothreonine mark. Residues 364–394 (IHLPEKSVPSERGLSPNNSGHDSTDTDSNHE) are disordered. Position 378 is a phosphoserine (S378). Basic and acidic residues predominate over residues 385–394 (DSTDTDSNHE). The C2H2-type 5 zinc finger occupies 452–474 (YRCDHCRVLFLDYVMFTIHMGCH). Positions 452 to 504 (YRCDHCRVLFLDYVMFTIHMGCHGFRDPFECNMCGYRSHDRYEFSSHIARGEH) are mediates homodimerization and heterodimerization. The C2H2-type 6; atypical zinc-finger motif lies at 480–504 (FECNMCGYRSHDRYEFSSHIARGEH).

It belongs to the Ikaros C2H2-type zinc-finger protein family. Homodimer. Heterodimer with other IKAROS family members. Interacts with IKZF4 and IKZF5. Interacts with IKZF1. Interacts with HRAS. Interacts with FOXP3; this interaction may be required for silencing target genes and regulating the suppressive activity of FOXP3-positive regulatory T-cells (Treg). Interacts with BCL21L isoform Bcl-X(L); this interaction blocks the anti-apoptotic role of BCL21L. Associates with histone deacetylase complexes containing HDAC1, MTA2 and SIN3A. Post-translationally, phosphorylation on tyrosine residues induced by IL2 is required for dissociation from HRAS and nuclear translocation of IKZF3 in T-cells. Phosphorylation on tyrosine residues induced by IL4 is required for dissociation from Bcl-X(L) in T-cells. As to expression, expressed most strongly in peripheral blood leukocytes, the spleen, and the thymus.

It localises to the nucleus. The protein resides in the cytoplasm. Its function is as follows. Transcription factor that plays an important role in the regulation of lymphocyte differentiation. Plays an essential role in regulation of B-cell differentiation, proliferation and maturation to an effector state. Involved in regulating BCL2 expression and controlling apoptosis in T-cells in an IL2-dependent manner. The polypeptide is Zinc finger protein Aiolos (IKZF3) (Homo sapiens (Human)).